A 271-amino-acid chain; its full sequence is Shikimate dehydrogenase (NADP(+)) (271 aa).

Residues 14-16 (SLS) and Thr-61 contribute to the shikimate site. Lys-65 acts as the Proton acceptor in catalysis. The shikimate site is built by Asn-86 and Asp-101. NADP(+) contacts are provided by residues 125–129 (GAGGA) and Ile-212. Tyr-214 contributes to the shikimate binding site. NADP(+) is bound at residue Gly-235.

The protein belongs to the shikimate dehydrogenase family. In terms of assembly, homodimer.

It catalyses the reaction shikimate + NADP(+) = 3-dehydroshikimate + NADPH + H(+). The protein operates within metabolic intermediate biosynthesis; chorismate biosynthesis; chorismate from D-erythrose 4-phosphate and phosphoenolpyruvate: step 4/7. In terms of biological role, involved in the biosynthesis of the chorismate, which leads to the biosynthesis of aromatic amino acids. Catalyzes the reversible NADPH linked reduction of 3-dehydroshikimate (DHSA) to yield shikimate (SA). In Clostridium perfringens (strain ATCC 13124 / DSM 756 / JCM 1290 / NCIMB 6125 / NCTC 8237 / Type A), this protein is Shikimate dehydrogenase (NADP(+)).